The primary structure comprises 165 residues: Transcription elongation factor GreA (165 aa).

The stretch at 55–78 (AAKEEQGKQELRVRQLTQLLESAK) forms a coiled coil.

It belongs to the GreA/GreB family.

Functionally, necessary for efficient RNA polymerase transcription elongation past template-encoded arresting sites. The arresting sites in DNA have the property of trapping a certain fraction of elongating RNA polymerases that pass through, resulting in locked ternary complexes. Cleavage of the nascent transcript by cleavage factors such as GreA or GreB allows the resumption of elongation from the new 3'terminus. GreA releases sequences of 2 to 3 nucleotides. This is Transcription elongation factor GreA from Streptomyces coelicolor (strain ATCC BAA-471 / A3(2) / M145).